The chain runs to 218 residues: Peptide methionine sulfoxide reductase MsrA (218 aa).

C54 is an active-site residue.

It belongs to the MsrA Met sulfoxide reductase family.

It catalyses the reaction L-methionyl-[protein] + [thioredoxin]-disulfide + H2O = L-methionyl-(S)-S-oxide-[protein] + [thioredoxin]-dithiol. The catalysed reaction is [thioredoxin]-disulfide + L-methionine + H2O = L-methionine (S)-S-oxide + [thioredoxin]-dithiol. Has an important function as a repair enzyme for proteins that have been inactivated by oxidation. Catalyzes the reversible oxidation-reduction of methionine sulfoxide in proteins to methionine. This Azorhizobium caulinodans (strain ATCC 43989 / DSM 5975 / JCM 20966 / LMG 6465 / NBRC 14845 / NCIMB 13405 / ORS 571) protein is Peptide methionine sulfoxide reductase MsrA.